Consider the following 260-residue polypeptide: Putative methylesterase 19 (260 aa).

The active-site Acyl-ester intermediate is Ser81. Catalysis depends on charge relay system residues Asp210 and His238.

This sequence belongs to the AB hydrolase superfamily. Methylesterase family.

Putative methylesterase. The sequence is that of Putative methylesterase 19 from Arabidopsis thaliana (Mouse-ear cress).